Consider the following 217-residue polypeptide: Coiled-coil domain-containing protein 124-B (217 aa).

A disordered region spans residues 1-123 (MPKKFQSENT…EKPKTHLEIP (123 aa)). 3 stretches are compositionally biased toward basic and acidic residues: residues 18–45 (RKAE…DDKH), 52–74 (RKEE…QRLL), and 98–123 (QIEE…LEIP). Residues 41–83 (DDDKHVVRKEHRKEEKEKKRLELLERKKESQRLLDEEDSKMKG) adopt a coiled-coil conformation.

The protein belongs to the CCDC124 family. As to quaternary structure, associates with translationally inactive ribosomes in the nonrotated state.

The protein localises to the cytoplasm. It localises to the cytoskeleton. It is found in the microtubule organizing center. Its subcellular location is the centrosome. The protein resides in the midbody. Its function is as follows. Ribosome-binding protein involved in ribosome hibernation: associates with translationally inactive ribosomes and stabilizes the nonrotated conformation of the 80S ribosome, thereby promoting ribosome preservation and storage. This chain is Coiled-coil domain-containing protein 124-B (ccdc124-b), found in Xenopus laevis (African clawed frog).